A 637-amino-acid chain; its full sequence is Threonine--tRNA ligase (637 aa).

Residues 1–61 (MITITLPDSS…ATDAAVRLIT (61 aa)) form the TGS domain. A catalytic region spans residues 238–528 (DHRKLGAELD…LIEHFAGKFP (291 aa)). 3 residues coordinate Zn(2+): Cys329, His380, and His505.

Belongs to the class-II aminoacyl-tRNA synthetase family. Homodimer. Zn(2+) is required as a cofactor.

The protein localises to the cytoplasm. The catalysed reaction is tRNA(Thr) + L-threonine + ATP = L-threonyl-tRNA(Thr) + AMP + diphosphate + H(+). Functionally, catalyzes the attachment of threonine to tRNA(Thr) in a two-step reaction: L-threonine is first activated by ATP to form Thr-AMP and then transferred to the acceptor end of tRNA(Thr). Also edits incorrectly charged L-seryl-tRNA(Thr). The chain is Threonine--tRNA ligase from Desulfosudis oleivorans (strain DSM 6200 / JCM 39069 / Hxd3) (Desulfococcus oleovorans).